Here is a 333-residue protein sequence, read N- to C-terminus: Phosphate acyltransferase (333 aa).

This sequence belongs to the PlsX family. As to quaternary structure, homodimer. Probably interacts with PlsY.

Its subcellular location is the cytoplasm. The enzyme catalyses a fatty acyl-[ACP] + phosphate = an acyl phosphate + holo-[ACP]. It participates in lipid metabolism; phospholipid metabolism. Catalyzes the reversible formation of acyl-phosphate (acyl-PO(4)) from acyl-[acyl-carrier-protein] (acyl-ACP). This enzyme utilizes acyl-ACP as fatty acyl donor, but not acyl-CoA. This Enterococcus faecalis (strain ATCC 700802 / V583) protein is Phosphate acyltransferase.